Reading from the N-terminus, the 506-residue chain is BTB/POZ domain and ankyrin repeat-containing protein NPR5 (506 aa).

Residues 23–131 (SDVTFSVEGR…LYSGQVSLVP (109 aa)) enclose the BTB domain. Residues 137 to 151 (RPGCGERGCWHTHCA) form a C2HC NPR-type zinc finger. Zn(2+) contacts are provided by C140, C145, H147, and C150. ANK repeat units lie at residues 278 to 306 (HKIRRMRRALDSSDVELVKLMVMGEGLNL), 307 to 337 (DDALALHYAVENCSREVVKALLELGAADVNH), 342 to 371 (AGKTPLHVAAEMVCPDMVAVLLDHHADPNV), and 375 to 409 (DGVTPLDILRTLTSDFLFKGAVPGLAHIEPNKLRL). Residues 481–506 (KMNDGGDGDDGGSRGPSSLFSPHGFP) form a disordered region.

It belongs to the plant 'ANKYRIN-BTB/POZ' family. 'NOOT-BOP-COCH-like' (NBCL) subfamily. As to quaternary structure, homodimer. Interacts with TGAL5, TGAL7, TGAL8 and TGAL11.

It localises to the nucleus. Its subcellular location is the cytoplasm. Its pathway is protein modification; protein ubiquitination. Its function is as follows. May act as a substrate-specific adapter of an E3 ubiquitin-protein ligase complex (CUL3-RBX1-BTB) which mediates the ubiquitination and subsequent proteasomal degradation of target proteins. Transcriptional co-regulator involved in the promotion of leaf and floral meristem fate and determinacy. Required for the abscission of senescent organs, probably by regulating the cell wall disorganization in abscission zones (AZs, e.g. pulvini at the base of leaves). Maybe involved in defense response against pathogens. The protein is BTB/POZ domain and ankyrin repeat-containing protein NPR5 of Oryza sativa subsp. japonica (Rice).